The chain runs to 477 residues: Cysteine--tRNA ligase (477 aa).

Zn(2+) is bound at residue cysteine 28. A 'HIGH' region motif is present at residues 30–40 (PTVYDYAHIGN). Zn(2+) is bound by residues cysteine 213, histidine 238, and glutamate 242. The 'KMSKS' region signature appears at 270-274 (KMSKS). Lysine 273 serves as a coordination point for ATP.

Belongs to the class-I aminoacyl-tRNA synthetase family. Monomer. Zn(2+) serves as cofactor.

Its subcellular location is the cytoplasm. It carries out the reaction tRNA(Cys) + L-cysteine + ATP = L-cysteinyl-tRNA(Cys) + AMP + diphosphate. The protein is Cysteine--tRNA ligase of Chlamydia trachomatis serovar A (strain ATCC VR-571B / DSM 19440 / HAR-13).